Reading from the N-terminus, the 362-residue chain is tRNA/tmRNA (uracil-C(5))-methyltransferase (362 aa).

Glutamine 182, tyrosine 210, asparagine 215, glutamate 231, and aspartate 293 together coordinate S-adenosyl-L-methionine. The Nucleophile role is filled by cysteine 318. The active-site Proton acceptor is glutamate 352.

It belongs to the class I-like SAM-binding methyltransferase superfamily. RNA M5U methyltransferase family. TrmA subfamily.

The enzyme catalyses uridine(54) in tRNA + S-adenosyl-L-methionine = 5-methyluridine(54) in tRNA + S-adenosyl-L-homocysteine + H(+). It carries out the reaction uridine(341) in tmRNA + S-adenosyl-L-methionine = 5-methyluridine(341) in tmRNA + S-adenosyl-L-homocysteine + H(+). Its function is as follows. Dual-specificity methyltransferase that catalyzes the formation of 5-methyluridine at position 54 (m5U54) in all tRNAs, and that of position 341 (m5U341) in tmRNA (transfer-mRNA). This Neisseria meningitidis serogroup B (strain ATCC BAA-335 / MC58) protein is tRNA/tmRNA (uracil-C(5))-methyltransferase.